Consider the following 583-residue polypeptide: Orphan steroid hormone receptor 2 (583 aa).

Positions Ile84–Cys159 form a DNA-binding region, nuclear receptor. NR C4-type zinc fingers lie at residues Cys87–Cys107 and Cys123–Cys142. The 316-residue stretch at Thr248–Glu563 folds into the NR LBD domain.

The protein belongs to the nuclear hormone receptor family. NR2 subfamily. Binds DNA as a monomer. Expressed uniformly in the early embryo. In contrast, larval expression is localized to the epaulettes and mouth epithelium. Expressed in multiple adult organs including lantern muscle, tubefeet, intestine, coelomocytes and gonads. In the adult ovaries and testes, expression is specifically localized to the smooth muscle epithelial layer of cells which surround the ovarioles and acini, respectively (at protein level).

It localises to the cytoplasm. The protein resides in the nucleus. In terms of biological role, orphan nuclear receptor. Binds to the hormone response element in the upstream promoter region of the CYIIIB gene in vitro. Both isoform 1 and isoform 2 bind DNA. In Strongylocentrotus purpuratus (Purple sea urchin), this protein is Orphan steroid hormone receptor 2.